Reading from the N-terminus, the 156-residue chain is Small ribosomal subunit protein uS7 (156 aa).

Belongs to the universal ribosomal protein uS7 family. As to quaternary structure, part of the 30S ribosomal subunit. Contacts proteins S9 and S11.

Functionally, one of the primary rRNA binding proteins, it binds directly to 16S rRNA where it nucleates assembly of the head domain of the 30S subunit. Is located at the subunit interface close to the decoding center, probably blocks exit of the E-site tRNA. This Clostridium acetobutylicum (strain ATCC 824 / DSM 792 / JCM 1419 / IAM 19013 / LMG 5710 / NBRC 13948 / NRRL B-527 / VKM B-1787 / 2291 / W) protein is Small ribosomal subunit protein uS7.